Reading from the N-terminus, the 347-residue chain is MQIQLGANLKPYHTFGIEQLAAQLVVAESIDDLKALYCSAEWASLPKLIIGKGSNMLFTCHYTGMVVVNRLNGIEHQQDDDYHRLHVAGGEDWPSLVSWCVEQGIGGLENLALIPGCAGSAPIQNIGAYGVEFKDVCDYVEYLCLETGTVKRLTMEECQFGYRDSIFKHQLYQKAVVTAVGLKFAKAWQPIIQYGPLKDLSSDCAIHDVYQRVCATRMEKLPDPAVMGNAGSFFKNPVISQQAFARLQIEHPDVVAYPAEQGVKVAAGWLIDQAGLKGHQIGGAKVHPKQALVIVNTGDASAQDVLMLAADIQQRVFNCYGIELEHEVRFIGESEETNLKQWMSEQA.

The FAD-binding PCMH-type domain occupies 17 to 187 (IEQLAAQLVV…TAVGLKFAKA (171 aa)). The active site involves R163. The Proton donor role is filled by S232. E327 is a catalytic residue.

Belongs to the MurB family. Requires FAD as cofactor.

The protein localises to the cytoplasm. It catalyses the reaction UDP-N-acetyl-alpha-D-muramate + NADP(+) = UDP-N-acetyl-3-O-(1-carboxyvinyl)-alpha-D-glucosamine + NADPH + H(+). The protein operates within cell wall biogenesis; peptidoglycan biosynthesis. In terms of biological role, cell wall formation. The chain is UDP-N-acetylenolpyruvoylglucosamine reductase from Vibrio cholerae serotype O1 (strain ATCC 39541 / Classical Ogawa 395 / O395).